Consider the following 138-residue polypeptide: Basic phospholipase A2 homolog 7 (138 aa).

A signal peptide spans 1–16; that stretch reads MRTLWLMAVLLVGVEG. Disulfide bonds link Cys-42/Cys-131, Cys-44/Cys-60, Cys-59/Cys-111, Cys-65/Cys-138, Cys-66/Cys-104, and Cys-91/Cys-102. An important for membrane-damaging activities in eukaryotes and bacteria; heparin-binding region spans residues 121–133; it reads KKKKINLKLFCKK.

The protein belongs to the phospholipase A2 family. Group II subfamily. K49 sub-subfamily. In terms of tissue distribution, expressed by the venom gland.

It is found in the secreted. In terms of biological role, snake venom phospholipase A2 homolog that lacks enzymatic activity. Is myotoxic and displays edema-inducing activities. A model of myotoxic mechanism has been proposed: an apo Lys49-PLA2 is activated by the entrance of a hydrophobic molecule (e.g. fatty acid) at the hydrophobic channel of the protein leading to a reorientation of a monomer. This reorientation causes a transition between 'inactive' to 'active' states, causing alignment of C-terminal and membrane-docking sites (MDoS) side-by-side and putting the membrane-disruption sites (MDiS) in the same plane, exposed to solvent and in a symmetric position for both monomers. The MDoS region stabilizes the toxin on membrane by the interaction of charged residues with phospholipid head groups. Subsequently, the MDiS region destabilizes the membrane with penetration of hydrophobic residues. This insertion causes a disorganization of the membrane, allowing an uncontrolled influx of ions (i.e. calcium and sodium), and eventually triggering irreversible intracellular alterations and cell death. This is Basic phospholipase A2 homolog 7 from Craspedocephalus gramineus (Bamboo pit viper).